The primary structure comprises 219 residues: Uracil-DNA glycosylase (219 aa).

Residue Asp59 is the Proton acceptor of the active site.

The protein belongs to the uracil-DNA glycosylase (UDG) superfamily. UNG family.

It is found in the cytoplasm. The catalysed reaction is Hydrolyzes single-stranded DNA or mismatched double-stranded DNA and polynucleotides, releasing free uracil.. In terms of biological role, excises uracil residues from the DNA which can arise as a result of misincorporation of dUMP residues by DNA polymerase or due to deamination of cytosine. In Macrococcus caseolyticus (strain JCSC5402) (Macrococcoides caseolyticum), this protein is Uracil-DNA glycosylase.